Consider the following 181-residue polypeptide: Probable Brix domain-containing ribosomal biogenesis protein (181 aa).

The region spanning 5-181 (CKVIITTSRE…RIKKVVYRHV (177 aa)) is the Brix domain.

Its function is as follows. Probably involved in the biogenesis of the ribosome. This chain is Probable Brix domain-containing ribosomal biogenesis protein, found in Pyrobaculum aerophilum (strain ATCC 51768 / DSM 7523 / JCM 9630 / CIP 104966 / NBRC 100827 / IM2).